Reading from the N-terminus, the 295-residue chain is Glutamyl-Q tRNA(Asp) synthetase (295 aa).

Residues 5–9 (RFAPS) and Glu41 contribute to the L-glutamate site. Positions 8 to 18 (PSPTGLLHIGS) match the 'HIGH' region motif. Cys97, Cys99, Tyr117, and Cys121 together coordinate Zn(2+). Positions 178 and 196 each coordinate L-glutamate. The short motif at 234–238 (KWSKQ) is the 'KMSKS' region element. Residue Lys237 participates in ATP binding.

Belongs to the class-I aminoacyl-tRNA synthetase family. GluQ subfamily. Zn(2+) is required as a cofactor.

Its function is as follows. Catalyzes the tRNA-independent activation of glutamate in presence of ATP and the subsequent transfer of glutamate onto a tRNA(Asp). Glutamate is transferred on the 2-amino-5-(4,5-dihydroxy-2-cyclopenten-1-yl) moiety of the queuosine in the wobble position of the QUC anticodon. The polypeptide is Glutamyl-Q tRNA(Asp) synthetase (Neisseria meningitidis serogroup C / serotype 2a (strain ATCC 700532 / DSM 15464 / FAM18)).